A 290-amino-acid polypeptide reads, in one-letter code: 33 kDa chaperonin (290 aa).

2 cysteine pairs are disulfide-bonded: Cys235–Cys237 and Cys268–Cys271.

The protein belongs to the HSP33 family. In terms of processing, under oxidizing conditions two disulfide bonds are formed involving the reactive cysteines. Under reducing conditions zinc is bound to the reactive cysteines and the protein is inactive.

It localises to the cytoplasm. Functionally, redox regulated molecular chaperone. Protects both thermally unfolding and oxidatively damaged proteins from irreversible aggregation. Plays an important role in the bacterial defense system toward oxidative stress. The polypeptide is 33 kDa chaperonin (Streptococcus equi subsp. zooepidemicus (strain MGCS10565)).